A 334-amino-acid chain; its full sequence is Aspartate carbamoyltransferase catalytic subunit (334 aa).

Carbamoyl phosphate-binding residues include Arg71 and Thr72. Lys99 is an L-aspartate binding site. Residues Arg121, His151, and Gln154 each contribute to the carbamoyl phosphate site. 2 residues coordinate L-aspartate: Arg184 and Arg239. Gly280 and Pro281 together coordinate carbamoyl phosphate.

This sequence belongs to the aspartate/ornithine carbamoyltransferase superfamily. ATCase family. In terms of assembly, heterododecamer (2C3:3R2) of six catalytic PyrB chains organized as two trimers (C3), and six regulatory PyrI chains organized as three dimers (R2).

The catalysed reaction is carbamoyl phosphate + L-aspartate = N-carbamoyl-L-aspartate + phosphate + H(+). It participates in pyrimidine metabolism; UMP biosynthesis via de novo pathway; (S)-dihydroorotate from bicarbonate: step 2/3. Functionally, catalyzes the condensation of carbamoyl phosphate and aspartate to form carbamoyl aspartate and inorganic phosphate, the committed step in the de novo pyrimidine nucleotide biosynthesis pathway. This chain is Aspartate carbamoyltransferase catalytic subunit, found in Pseudomonas syringae pv. tomato (strain ATCC BAA-871 / DC3000).